Consider the following 268-residue polypeptide: 4-hydroxy-tetrahydrodipicolinate reductase (268 aa).

Residues 7-12 (GAGGRM) and glutamate 33 contribute to the NAD(+) site. Position 34 (arginine 34) interacts with NADP(+). Residues 97–99 (GTT) and 121–124 (SGNM) contribute to the NAD(+) site. The active-site Proton donor/acceptor is histidine 155. A (S)-2,3,4,5-tetrahydrodipicolinate-binding site is contributed by histidine 156. Lysine 159 serves as the catalytic Proton donor. 165-166 (GT) provides a ligand contact to (S)-2,3,4,5-tetrahydrodipicolinate.

Belongs to the DapB family.

It localises to the cytoplasm. It catalyses the reaction (S)-2,3,4,5-tetrahydrodipicolinate + NAD(+) + H2O = (2S,4S)-4-hydroxy-2,3,4,5-tetrahydrodipicolinate + NADH + H(+). It carries out the reaction (S)-2,3,4,5-tetrahydrodipicolinate + NADP(+) + H2O = (2S,4S)-4-hydroxy-2,3,4,5-tetrahydrodipicolinate + NADPH + H(+). Its pathway is amino-acid biosynthesis; L-lysine biosynthesis via DAP pathway; (S)-tetrahydrodipicolinate from L-aspartate: step 4/4. Catalyzes the conversion of 4-hydroxy-tetrahydrodipicolinate (HTPA) to tetrahydrodipicolinate. In Brucella melitensis biotype 1 (strain ATCC 23456 / CCUG 17765 / NCTC 10094 / 16M), this protein is 4-hydroxy-tetrahydrodipicolinate reductase.